The primary structure comprises 149 residues: SKP1-like protein 14 (149 aa).

The interval 91 to 149 (LLAANYLNIKGLLDLSAQTVADRIKDKTPEEIREIFNIENDFTPEEEAAVRKENAWAFE) is interaction with the F-box domain of F-box proteins.

This sequence belongs to the SKP1 family. As to quaternary structure, part of a SCF (SKP1-cullin-F-box) protein ligase complex. Interacts with CPR1/CPR30, At3g61590, At4g39550 and At5g49610. Restricted to inflorescences, pollen and leaves.

It is found in the nucleus. It participates in protein modification; protein ubiquitination. Involved in ubiquitination and subsequent proteasomal degradation of target proteins. Together with CUL1, RBX1 and a F-box protein, it forms a SCF E3 ubiquitin ligase complex. The functional specificity of this complex depends on the type of F-box protein. In the SCF complex, it serves as an adapter that links the F-box protein to CUL1. The polypeptide is SKP1-like protein 14 (ASK14) (Arabidopsis thaliana (Mouse-ear cress)).